Here is a 309-residue protein sequence, read N- to C-terminus: Probable porphobilinogen deaminase (309 aa).

Position 233 is an S-(dipyrrolylmethanemethyl)cysteine (cysteine 233).

This sequence belongs to the HMBS family. Dipyrromethane is required as a cofactor.

The enzyme catalyses 4 porphobilinogen + H2O = hydroxymethylbilane + 4 NH4(+). Its pathway is porphyrin-containing compound metabolism; protoporphyrin-IX biosynthesis; coproporphyrinogen-III from 5-aminolevulinate: step 2/4. Functionally, tetrapolymerization of the monopyrrole PBG into the hydroxymethylbilane pre-uroporphyrinogen in several discrete steps. This chain is Probable porphobilinogen deaminase, found in Methanococcoides burtonii (strain DSM 6242 / NBRC 107633 / OCM 468 / ACE-M).